The primary structure comprises 2547 residues: Piezo-type mechanosensitive ion channel component 1 (2547 aa).

At 1–12 the chain is on the cytoplasmic side; it reads MEPHVLGAGLYW. The helical transmembrane segment at 13-25 threads the bilayer; that stretch reads LLLPCTLLAASLL. Residues 26–28 are Extracellular-facing; that stretch reads RFN. Residues 29 to 44 traverse the membrane as a helical segment; that stretch reads ALSLVYLLFLLLLPWL. At 45-58 the chain is on the cytoplasmic side; sequence PGPSRHSIPGHTGR. A helical transmembrane segment spans residues 59 to 81; it reads LLRALLCLSLLFLVAHLAFQICL. Over 82–121 the chain is Extracellular; the sequence is HTVPHLDQFLGQNGSLWVKVSQHIGVTRLDLKDIFNTTRL. An N-linked (GlcNAc...) asparagine glycan is attached at N94. Residues 122–138 traverse the membrane as a helical segment; that stretch reads VAPDLGVLLASSLCLGL. Topologically, residues 139 to 201 are cytoplasmic; that stretch reads CGRLTRKAGQ…ASRFRVTAHW (63 aa). A helical membrane pass occupies residues 202–221; that stretch reads LLMTSGRTLVIVLLALAGIA. The Extracellular portion of the chain corresponds to 222–223; that stretch reads HP. A helical membrane pass occupies residues 224 to 243; that stretch reads SAFSSIYLVVFLAICTWWSC. At 244 to 254 the chain is on the cytoplasmic side; that stretch reads HFPLSPLGFNT. The helical transmembrane segment at 255 to 275 threads the bilayer; it reads LCVMVSCFGAGHLICLYCYQT. Residues 276–316 are Extracellular-facing; the sequence is PFIQDMLPPGNIWARLFGLKNFVDLPNYSSPNALVLNTKHA. The chain crosses the membrane as a helical span at residues 317 to 337; that stretch reads WPIYVSPGILLLLYYTATSLL. The Cytoplasmic segment spans residues 338–424; that stretch reads KLHKSCPSEL…EMSPLHGLGH (87 aa). The tract at residues 347–387 is disordered; that stretch reads LRKETPREDEEHELELDHLEPEPQARDATQGEMPMTTEPDL. Positions 361–371 are enriched in basic and acidic residues; that stretch reads ELDHLEPEPQA. The helical transmembrane segment at 425 to 445 threads the bilayer; that stretch reads LIMDQSYVCALIAMMVWSIMY. Residues 446–447 are Extracellular-facing; the sequence is HS. A helical membrane pass occupies residues 448 to 463; sequence WLTFVLLLWACLIWTV. The Cytoplasmic portion of the chain corresponds to 464–468; that stretch reads RSRHQ. The helical transmembrane segment at 469–491 threads the bilayer; sequence LAMLCSPCILLYGLTLCCLRYVW. At 492–518 the chain is on the extracellular side; that stretch reads AMELPELPTTLGPVSLHQLGLEHTRYP. A helical membrane pass occupies residues 519–536; the sequence is CLDLGAMLLYLLTFWLLL. At 537–580 the chain is on the cytoplasmic side; that stretch reads RQFVKEKLLKKQKVPAALLEVTVADTEPTQTQTLLRSLGELVTG. Residues 581–601 traverse the membrane as a helical segment; the sequence is IYVKYWIYVCAGMFIVVSFAG. Residue R602 is a topological domain, extracellular. Residues 603-623 form a helical membrane-spanning segment; sequence LVVYKIVYMFLFLLCLTLFQV. The Cytoplasmic portion of the chain corresponds to 624-633; that stretch reads YYTLWRKLLR. Residues 634-655 traverse the membrane as a helical segment; sequence VFWWLVVAYTMLVLIAVYTFQF. Topologically, residues 656 to 685 are extracellular; sequence QDFPTYWRNLTGFTDEQLGDLGLEQFSVSE. The helical transmembrane segment at 686-702 threads the bilayer; the sequence is LFSSILIPGFFLLACIL. Residues 703–811 lie on the Cytoplasmic side of the membrane; that stretch reads QLHYFHRPFM…RRLLELHVFK (109 aa). S758 bears the Phosphoserine mark. Residues 812 to 823 form a helical membrane-spanning segment; sequence LVALYTVWVALK. The Extracellular segment spans residues 824-826; sequence EVS. Residues 827-840 traverse the membrane as a helical segment; that stretch reads VMNLLLVVLWAFAL. Residues 841–854 are Cytoplasmic-facing; it reads PYPRFRPMASCLST. Residues 855-869 form a helical membrane-spanning segment; the sequence is VWTCIIIVCKMLYQL. Residues 870 to 921 are Extracellular-facing; that stretch reads KIVNPHEYSSNCTEPFPNNTNLQPLEINQSLLYRGPVDPANWFGVRKGYPNL. A helical transmembrane segment spans residues 922–949; the sequence is GYIQNHLQILLLLVFEAVVYRRQEHYRR. Residues 950–989 lie on the Cytoplasmic side of the membrane; sequence QHQQAPLPAQAVCADGTRQRLDQDLLSCLKYFINFFFYKF. The chain crosses the membrane as a helical span at residues 990–1005; that stretch reads GLEICFLMAVNVIGQR. Residues 1006 to 1007 are Extracellular-facing; sequence MN. A helical membrane pass occupies residues 1008–1023; it reads FMVILHGCWLVAILTR. Residues 1024-1036 are Cytoplasmic-facing; the sequence is RRREAIARLWPNY. Residues 1037–1052 form a helical membrane-spanning segment; the sequence is CLFLTLFLLYQYLLCL. The Extracellular portion of the chain corresponds to 1053 to 1091; that stretch reads GMPPALCIDYPWRWSKAIPMNSALIKWLYLPDFFRAPNS. A helical transmembrane segment spans residues 1092–1113; sequence TNLISDFLLLLCASQQWQVFSA. Residues 1114–1148 lie on the Cytoplasmic side of the membrane; the sequence is ERTEEWQRMAGINTDHLEPLRGEPNPIPNFIHCRS. The chain crosses the membrane as a helical span at residues 1149–1175; that stretch reads YLDMLKVAVFRYLFWLVLVVVFVAGAT. Residues 1176-1180 lie on the Extracellular side of the membrane; that stretch reads RISIF. A helical membrane pass occupies residues 1181–1199; it reads GLGYLLACFYLLLFGTTLL. The Cytoplasmic portion of the chain corresponds to 1200–1212; it reads QKDTRAQLVLWDC. A helical membrane pass occupies residues 1213-1231; the sequence is LILYNVTVIISKNMLSLLS. At 1232–1280 the chain is on the extracellular side; that stretch reads CVFVEQMQSNFCWVIQLFSLVCTVKGYYDPKEMMTRDRDCLLPVEEAGI. The chain crosses the membrane as a helical span at residues 1281-1297; sequence IWDSICFFFLLLQRRIF. Topologically, residues 1298-1656 are cytoplasmic; it reads LSHYFLHVSA…ELLLDRRLHI (359 aa). Positions 1334–1365 form a coiled coil; the sequence is HRQIEEKSLAQLKRQMKRIRAKQEKYRQSQAS. 3 disordered regions span residues 1354 to 1396, 1456 to 1480, and 1567 to 1610; these read AKQE…RRQW, RRER…DVEP, and TLSG…NTRS. Residues 1361–1372 show a composition bias toward polar residues; that stretch reads QSQASRGQLQSK. Low complexity predominate over residues 1376–1392; that stretch reads DPSQEPGPDSPGGSSPP. Phosphoserine occurs at positions 1385 and 1390. The span at 1592–1610 shows a compositional bias: polar residues; sequence SSMTDDTSSPLSTGYNTRS. A phosphoserine mark is found at S1627, S1631, and S1646. A helical membrane pass occupies residues 1657-1700; it reads PELEEAERFEAQQGRTLRLLRAGYQCVAAHSELLCYFIIILNHM. The Extracellular segment spans residues 1701–1704; sequence VTAS. The helical transmembrane segment at 1705-1720 threads the bilayer; sequence AASLVLPVLVFLWAML. Over 1721 to 1728 the chain is Cytoplasmic; sequence TIPRPSKR. Residues 1729–1747 traverse the membrane as a helical segment; that stretch reads FWMTAIVFTEVMVVTKYLF. Residues 1748 to 1779 are Extracellular-facing; sequence QFGFFPWNSYVVLRRYENKPYFPPRILGLEKT. The helical transmembrane segment at 1780–1801 threads the bilayer; sequence DSYIKYDLVQLMALFFHRSQLL. The Cytoplasmic segment spans residues 1802–1976; that stretch reads CYGLWDHEED…HTKYRAATDV (175 aa). Basic and acidic residues-rich tracts occupy residues 1816–1837 and 1855–1880; these read DHCR…KLES and PRDH…DLKP. A disordered region spans residues 1816–1931; sequence DHCRSSVKDR…RPRHTQEKSK (116 aa). Residues 1881–1894 show a composition bias toward basic residues; it reads RHTRHISIRFRRRK. The segment covering 1912–1931 has biased composition (basic and acidic residues); that stretch reads GEGKETTERKRPRHTQEKSK. A helical transmembrane segment spans residues 1977–1996; sequence YALMFLADIVDIIIIIFGFW. Topologically, residues 1997–2016 are extracellular; sequence AFGKHSAATDIASSLSDDQV. A helical membrane pass occupies residues 2017–2033; it reads PQAFLFMLLVQFGTMVI. Topologically, residues 2034–2047 are cytoplasmic; that stretch reads DRALYLRKTVLGKL. The chain crosses the membrane as a helical span at residues 2048 to 2068; sequence AFQVVLVVAIHIWMFFILPAV. The Extracellular portion of the chain corresponds to 2069 to 2076; it reads TERMFSQN. Residues 2077-2092 form a helical membrane-spanning segment; that stretch reads AVAQLWYFVKCIYFAL. Topologically, residues 2093-2192 are cytoplasmic; that stretch reads SAYQIRCGYP…KKKIVKYGMG (100 aa). Residues 2193–2213 form a helical membrane-spanning segment; the sequence is GLIILFLIAIIWFPLLFMSLI. Residues 2214 to 2457 are Extracellular-facing; that stretch reads RSVVGVVNQP…IFSDKVSPPS (244 aa). C2437 and C2441 are disulfide-bonded. A helical transmembrane segment spans residues 2458–2478; sequence LGFLAGYGIVGLYVSIVLVVG. Residues 2479–2547 lie on the Cytoplasmic side of the membrane; the sequence is KFVRGFFSEI…TMIKWTRERE (69 aa).

The protein belongs to the PIEZO (TC 1.A.75) family. Homotrimer; the homotrimer forms a propeller-shaped Piezo channel with a cation-ion conducting pore. Heterotrimeric interaction may occur between PIEZO1 and PIEZO2. Interacts with PKD2. Interacts with STOMl3. Interacts with TMC1, TMC2, PCDG15 and CIB2; the interaction may be part of the MET complex. Interacts with MDFIC (via C-terminus); the interaction prolongs Piezo channel inactivation. Interacts with MDFI (via C-terminus); the interaction prolongs Piezo channel inactivation. In terms of tissue distribution, expressed in bladder, colon, kidney and skin. Also expressed in bone marrow, liver, lung, spleen and erythrocytes (at protein level). Expressed in myoblasts (at protein level). Expressed in red blood cells. Expressed in cochlear inner and outer hair cells (IHCs and OHCs) and vestibular organ HCs.

It localises to the endoplasmic reticulum membrane. It is found in the endoplasmic reticulum-Golgi intermediate compartment membrane. The protein resides in the cell membrane. Its subcellular location is the cell projection. The protein localises to the lamellipodium membrane. It catalyses the reaction K(+)(in) = K(+)(out). It carries out the reaction Na(+)(in) = Na(+)(out). The enzyme catalyses Ca(2+)(in) = Ca(2+)(out). The catalysed reaction is Mg(2+)(in) = Mg(2+)(out). Its activity is regulated as follows. Regulated by auxillary subunits MDFIC and MDFI. Down-regulated by phosphatidylserines exposed on the cell surface. Divalent ions decrease the single-channel permeability of K(+). Functionally, pore-forming subunit of the mechanosensitive non-specific cation Piezo channel required for rapidly adapting mechanically activated (MA) currents and has a key role in sensing touch and tactile pain. Piezo channels are homotrimeric three-blade propeller-shaped structures that utilize a cap-motion and plug-and-latch mechanism to gate their ion-conducting pathways. Generates currents characterized by a linear current-voltage relationship that are sensitive to ruthenium red and gadolinium. Conductance to monovalent alkali ions is highest for K(+), intermediate for Na(+) and lowest for Li(+). Divalent ions except for Mn(2+) permeate the channel but more slowly than the monovalent ions and they also reduce K(+) currents. Plays a key role in epithelial cell adhesion by maintaining integrin activation through R-Ras recruitment to the ER, most probably in its activated state, and subsequent stimulation of calpain signaling. In inner ear hair cells, PIEZO1/2 subunits may constitute part of the mechanotransducer (MET) non-selective cation channel complex where they may act as pore-forming ion-conducting component in the complex. In the kidney, may contribute to the detection of intraluminal pressure changes and to urine flow sensing. Acts as a shear-stress sensor that promotes endothelial cell organization and alignment in the direction of blood flow through calpain activation. Plays a key role in blood vessel formation and vascular structure in both development and adult physiology. Acts as a sensor of phosphatidylserine (PS) flipping at the plasma membrane and governs morphogenesis of muscle cells. In myoblasts, flippase-mediated PS enrichment at the inner leaflet of plasma membrane triggers channel activation and Ca(2+) influx followed by Rho GTPases signal transduction, leading to assembly of cortical actomyosin fibers and myotube formation. This Mus musculus (Mouse) protein is Piezo-type mechanosensitive ion channel component 1.